A 299-amino-acid polypeptide reads, in one-letter code: uncharacterized protein (299 aa).

This is an uncharacterized protein from Archaeoglobus fulgidus (strain ATCC 49558 / DSM 4304 / JCM 9628 / NBRC 100126 / VC-16).